The following is a 129-amino-acid chain: Glycine cleavage system H protein (129 aa).

The 83-residue stretch at 24–106 (LLKIGVSEFA…IGNGWLLIIK (83 aa)) folds into the Lipoyl-binding domain. Lys65 is modified (N6-lipoyllysine).

Belongs to the GcvH family. In terms of assembly, the glycine cleavage system is composed of four proteins: P, T, L and H. Requires (R)-lipoate as cofactor.

Functionally, the glycine cleavage system catalyzes the degradation of glycine. The H protein shuttles the methylamine group of glycine from the P protein to the T protein. The chain is Glycine cleavage system H protein from Prochlorococcus marinus (strain MIT 9515).